Consider the following 607-residue polypeptide: MASLKELLPTPKAAASTFYDHSSDPWFKERYGGESAQSDAAAAAAKPSGPAKPVPPYGKRGGFVPRRPEDFGDGGAFPEIHVAQYPLGMGRRDEKGGSKILALTVDAKGSVAFDAVVKQGENASKIVYSKHSDLVPKIATADSEATADDEEYQKQIEETTERTKAALEKVVNVRLSAAQPKNVPTHDSESKFIKYKPSQQSAAFNSGAKERIIRMSEMAQDPLEPPKFKHKRVPRASGSPPVPVMHSPPRPVTVKDQQDWKIPPCISNWKNPKGYTIPLDKRLAADGRGLQEVQINDNFAKLSEALYVAEQKAREAVQMRSKVQRELQLKEKERKEQELRALAQKARMERTGAPPAPTGVPAGGGRGAVDDREEDMDLEQPREQRRESREEREARIERDRIREERRRERERERRLEARDAAMGKKSKLTRDRDRDVSEKIALGMASTGGAKGGEVMYDQRLFNQDKGMDSGFATDDQYNIYSKGLFTAQPTLSTLYRPKKDGDSDVYGDADEQLEKVMKTDRFKPDKGFSGASERSGKRDRPVEFDKQEENDPFGLDQFLTEVKKGKKAVEKIGSGGAMRASGGSSMRDDYEGGGSGRSRINFERGR.

Disordered stretches follow at residues 29–77 (ERYG…GGAF), 178–205 (AQPK…AAFN), 217–265 (EMAQ…IPPC), 327–434 (LQLK…DRDR), and 516–607 (KVMK…ERGR). Low complexity predominate over residues 35–49 (SAQSDAAAAAAKPSG). Positions 190–353 (SKFIKYKPSQ…QKARMERTGA (164 aa)) are SNW. The segment covering 240-251 (PPVPVMHSPPRP) has biased composition (pro residues). 2 coiled-coil regions span residues 313–349 (AREA…ARME) and 391–418 (EREA…LEAR). Basic and acidic residues-rich tracts occupy residues 327–339 (LQLK…EQEL), 379–434 (EQPR…DRDR), 516–527 (KVMKTDRFKPDK), 535–550 (RSGK…KQEE), and 562–571 (EVKKGKKAVE).

Belongs to the SNW family. Interacts with FLO6/SIP4. Interacts with DIS1. In terms of tissue distribution, widely expressed.

The protein localises to the nucleus. Its function is as follows. Acts as a positive regulator of drought and salt tolerance. Acts as a positive regulator of cell viability. This is SNW/SKI-interacting protein A from Oryza sativa subsp. japonica (Rice).